The sequence spans 134 residues: Endoribonuclease YbeY (134 aa).

Positions 94, 98, and 104 each coordinate Zn(2+).

This sequence belongs to the endoribonuclease YbeY family. It depends on Zn(2+) as a cofactor.

Its subcellular location is the cytoplasm. Functionally, single strand-specific metallo-endoribonuclease involved in late-stage 70S ribosome quality control and in maturation of the 3' terminus of the 16S rRNA. This Campylobacter fetus subsp. fetus (strain 82-40) protein is Endoribonuclease YbeY.